Here is an 859-residue protein sequence, read N- to C-terminus: Mycobactin import ATP-binding/permease protein IrtA (859 aa).

At methionine 1–proline 292 the chain is on the cytoplasmic side. The FAD-binding FR-type domain occupies alanine 15–aspartate 122. FAD is bound by residues arginine 70–threonine 73, aspartate 87–histidine 91, and alanine 97–serine 98. The disordered stretch occupies residues histidine 247–serine 267. A helical transmembrane segment spans residues leucine 293–leucine 313. An ABC transmembrane type-1 domain is found at leucine 293 to threonine 575. The Periplasmic segment spans residues leucine 314 to glycine 334. The chain crosses the membrane as a helical span at residues phenylalanine 335–leucine 355. Over histidine 356–alanine 408 the chain is Cytoplasmic. The chain crosses the membrane as a helical span at residues valine 409–valine 429. At aspartate 430–arginine 432 the chain is on the periplasmic side. The helical transmembrane segment at valine 433–isoleucine 453 threads the bilayer. At glutamine 454 to aspartate 519 the chain is on the cytoplasmic side. The helical transmembrane segment at leucine 520–alanine 540 threads the bilayer. Over threonine 541–asparagine 548 the chain is Periplasmic. Residues leucine 549 to glycine 569 traverse the membrane as a helical segment. The Cytoplasmic segment spans residues leucine 570 to arginine 859. One can recognise an ABC transporter domain in the interval valine 610–threonine 843. An ATP-binding site is contributed by glycine 643–serine 650.

This sequence belongs to the ABC transporter superfamily. Siderophore-Fe(3+) uptake transporter (SIUT) (TC 3.A.1.21) family. As to quaternary structure, forms a heterodimer with IrtB. FAD is required as a cofactor.

Its subcellular location is the cell inner membrane. Its function is as follows. Part of the ABC transporter complex IrtAB involved in the import of iron-bound mycobactin (Fe-MBT) and carboxymycobactin (Fe-cMBT). Mycobactins are then reduced by the siderophore interaction domain to facilitate iron release in the bacterial cell. Transmembrane domains (TMD) form a pore in the membrane and the ATP-binding domain (NBD) is responsible for energy generation. Required for replication in human macrophages and in mouse lungs. In Mycobacterium tuberculosis (strain ATCC 25618 / H37Rv), this protein is Mycobactin import ATP-binding/permease protein IrtA (irtA).